The chain runs to 514 residues: 2,3-bisphosphoglycerate-independent phosphoglycerate mutase (514 aa).

Mn(2+)-binding residues include Asp-13 and Ser-63. Ser-63 acts as the Phosphoserine intermediate in catalysis. Substrate-binding positions include His-124, 154-155 (RD), Arg-186, Arg-192, 258-261 (RADR), and Lys-332. Residues Asp-399, His-403, Asp-440, His-441, and His-459 each contribute to the Mn(2+) site.

The protein belongs to the BPG-independent phosphoglycerate mutase family. Monomer. Mn(2+) serves as cofactor.

It catalyses the reaction (2R)-2-phosphoglycerate = (2R)-3-phosphoglycerate. It functions in the pathway carbohydrate degradation; glycolysis; pyruvate from D-glyceraldehyde 3-phosphate: step 3/5. Its function is as follows. Catalyzes the interconversion of 2-phosphoglycerate and 3-phosphoglycerate. The chain is 2,3-bisphosphoglycerate-independent phosphoglycerate mutase from Legionella pneumophila (strain Paris).